We begin with the raw amino-acid sequence, 421 residues long: Medium-chain specific acyl-CoA dehydrogenase, mitochondrial (421 aa).

The N-terminal 25 residues, 1–25 (MAAALRRGYKVLRSVSHFECRAQHT), are a transit peptide targeting the mitochondrion. Lys69 bears the N6-acetyllysine; alternate mark. Position 69 is an N6-succinyllysine; alternate (Lys69). Lys79 carries the post-translational modification N6-acetyllysine. Position 158 to 167 (158 to 167 (YCVTEPSAGS)) interacts with FAD. Ser167 provides a ligand contact to octanoyl-CoA. Lys179 is modified (N6-succinyllysine). 191–193 (WIT) provides a ligand contact to FAD. At Lys212 the chain carries N6-acetyllysine; alternate. An N6-succinyllysine; alternate modification is found at Lys212. Ser216 lines the octanoyl-CoA pocket. N6-acetyllysine; alternate occurs at positions 217, 259, and 271. N6-succinyllysine; alternate occurs at positions 217, 259, and 271. Octanoyl-CoA-binding residues include Asp278 and Arg281. At Lys301 the chain carries N6-acetyllysine. FAD contacts are provided by residues 306–308 (RKT) and 316–317 (HQ). 2 residues coordinate octanoyl-CoA: Arg349 and Thr351. A Phosphothreonine modification is found at Thr351. 374 to 378 (QIFGG) lines the FAD pocket. Residue Glu401 participates in octanoyl-CoA binding. The active-site Proton acceptor is Glu401. 402–405 (GTAQ) contacts FAD.

The protein belongs to the acyl-CoA dehydrogenase family. As to quaternary structure, homotetramer. Interacts with the heterodimeric electron transfer flavoprotein ETF. FAD is required as a cofactor. Post-translationally, acetylated. Could occur at proximity of the cofactor-binding sites and reduce the catalytic activity. Could be deacetylated by SIRT3.

The protein localises to the mitochondrion matrix. It carries out the reaction a medium-chain 2,3-saturated fatty acyl-CoA + oxidized [electron-transfer flavoprotein] + H(+) = a medium-chain (2E)-enoyl-CoA + reduced [electron-transfer flavoprotein]. It catalyses the reaction pentanoyl-CoA + oxidized [electron-transfer flavoprotein] + H(+) = (2E)-pentenoyl-CoA + reduced [electron-transfer flavoprotein]. The enzyme catalyses hexanoyl-CoA + oxidized [electron-transfer flavoprotein] + H(+) = (2E)-hexenoyl-CoA + reduced [electron-transfer flavoprotein]. The catalysed reaction is octanoyl-CoA + oxidized [electron-transfer flavoprotein] + H(+) = (2E)-octenoyl-CoA + reduced [electron-transfer flavoprotein]. It carries out the reaction decanoyl-CoA + oxidized [electron-transfer flavoprotein] + H(+) = (2E)-decenoyl-CoA + reduced [electron-transfer flavoprotein]. It catalyses the reaction dodecanoyl-CoA + oxidized [electron-transfer flavoprotein] + H(+) = (2E)-dodecenoyl-CoA + reduced [electron-transfer flavoprotein]. The enzyme catalyses tetradecanoyl-CoA + oxidized [electron-transfer flavoprotein] + H(+) = (2E)-tetradecenoyl-CoA + reduced [electron-transfer flavoprotein]. The catalysed reaction is oxidized [electron-transfer flavoprotein] + hexadecanoyl-CoA + H(+) = (2E)-hexadecenoyl-CoA + reduced [electron-transfer flavoprotein]. It participates in lipid metabolism; mitochondrial fatty acid beta-oxidation. Functionally, medium-chain specific acyl-CoA dehydrogenase is one of the acyl-CoA dehydrogenases that catalyze the first step of mitochondrial fatty acid beta-oxidation, an aerobic process breaking down fatty acids into acetyl-CoA and allowing the production of energy from fats. The first step of fatty acid beta-oxidation consists in the removal of one hydrogen from C-2 and C-3 of the straight-chain fatty acyl-CoA thioester, resulting in the formation of trans-2-enoyl-CoA. Electron transfer flavoprotein (ETF) is the electron acceptor that transfers electrons to the main mitochondrial respiratory chain via ETF-ubiquinone oxidoreductase (ETF dehydrogenase). Among the different mitochondrial acyl-CoA dehydrogenases, medium-chain specific acyl-CoA dehydrogenase acts specifically on acyl-CoAs with saturated 6 to 12 carbons long primary chains. This chain is Medium-chain specific acyl-CoA dehydrogenase, mitochondrial, found in Rattus norvegicus (Rat).